The following is a 294-amino-acid chain: Fructose-bisphosphate aldolase class 1 (294 aa).

The Proton acceptor role is filled by E176. K213 functions as the Schiff-base intermediate with dihydroxyacetone-P in the catalytic mechanism.

Belongs to the class I fructose-bisphosphate aldolase family.

The enzyme catalyses beta-D-fructose 1,6-bisphosphate = D-glyceraldehyde 3-phosphate + dihydroxyacetone phosphate. It functions in the pathway carbohydrate degradation; glycolysis; D-glyceraldehyde 3-phosphate and glycerone phosphate from D-glucose: step 4/4. In Oceanobacillus iheyensis (strain DSM 14371 / CIP 107618 / JCM 11309 / KCTC 3954 / HTE831), this protein is Fructose-bisphosphate aldolase class 1.